The sequence spans 473 residues: Sulfhydrylase-like protein lolC2 (473 aa).

Lys226 carries the N6-(pyridoxal phosphate)lysine modification.

Belongs to the trans-sulfuration enzymes family. Pyridoxal 5'-phosphate serves as cofactor.

The protein operates within alkaloid biosynthesis. Sulfhydrylase-like protein; part of the gene cluster that mediates the biosynthesis of loline alkaloids, potent insecticidal agents composed of a pyrrolizidine ring system and an uncommon ether bridge linking carbons 2 and 7. Lolines are structurally differentiated by the various modifications of the L-amino group and include norloline, loline, N-methylloline, N-acetylloline, N-acetylnorloline, and N-formylloline. The first committed step is the condensation of O-acetyl-L-homoserine (derived from L-aspartic acid) and L-proline, probably catalyzed by the gamma-type pyridoxal 5'-phosphate(PLP)-dependent enzyme lolC, to give the diamino diacid, NACPP. Ensuing cyclization, decarboxylation, and acetylation steps yield 1-exo-acetamidopyrrolizidine (AcAP). LolO is required for installation of the ether bridge upon the pathway intermediate, 1-exo-acetamidopyrrolizidine (AcAP). In sequential 2-oxoglutarate- and O(2)-consuming steps, lolO removes hydrogens from C2 and C7 of AcAP to form both carbon-oxygen bonds in N-acetylnorloline (NANL), the precursor to all other lolines. The enzymes lolD, lolE, lolF and lolT have also been proposed to be involved in the ether-bridge installation. Further processing of the exocyclic moiety of NANL by fungal N-acetamidase (LolN), methyltransferase (LolM), and cytochrome P450 (LolP) enzymes, with occasional involvement of a plant acetyltransferase, generates the other known lolines. LolN transforms NANL to norlonine which is monomethylated and dimethylated to respectively lonine and N-methyllonine (NML) by lolM. LolP catalyzes hydroxylation of the methyl group in N-methylloline (NML) and further oxygenation to N-formylloline (NFL). A plant acetyltransferase is responsible for the acetylation of loline to form N-acetylloline (NAL). LolA might interact with aspartate kinase to prevent feedback inhibition of its activity by these end products and thereby promote production of L-homoserine from L-aspartate. In Epichloe uncinata (Endophyte fungus), this protein is Sulfhydrylase-like protein lolC2.